Reading from the N-terminus, the 341-residue chain is Phosphate acyltransferase (341 aa).

This sequence belongs to the PlsX family. In terms of assembly, homodimer. Probably interacts with PlsY.

Its subcellular location is the cytoplasm. It catalyses the reaction a fatty acyl-[ACP] + phosphate = an acyl phosphate + holo-[ACP]. Its pathway is lipid metabolism; phospholipid metabolism. Functionally, catalyzes the reversible formation of acyl-phosphate (acyl-PO(4)) from acyl-[acyl-carrier-protein] (acyl-ACP). This enzyme utilizes acyl-ACP as fatty acyl donor, but not acyl-CoA. The sequence is that of Phosphate acyltransferase from Pseudoalteromonas atlantica (strain T6c / ATCC BAA-1087).